The sequence spans 525 residues: GMP synthase [glutamine-hydrolyzing] (525 aa).

A Glutamine amidotransferase type-1 domain is found at 9–207 (RILILDFGSQ…VQDICGCEAL (199 aa)). The Nucleophile role is filled by Cys-86. Active-site residues include His-181 and Glu-183. The GMPS ATP-PPase domain maps to 208–400 (WTASNIVEDA…LGLPYDMVYR (193 aa)). 235-241 (SGGVDSS) contacts ATP.

In terms of assembly, homodimer.

The catalysed reaction is XMP + L-glutamine + ATP + H2O = GMP + L-glutamate + AMP + diphosphate + 2 H(+). It participates in purine metabolism; GMP biosynthesis; GMP from XMP (L-Gln route): step 1/1. Its function is as follows. Catalyzes the synthesis of GMP from XMP. The sequence is that of GMP synthase [glutamine-hydrolyzing] from Pseudomonas putida (strain GB-1).